Reading from the N-terminus, the 343-residue chain is Probable dual-specificity RNA methyltransferase RlmN (343 aa).

Glutamate 91 functions as the Proton acceptor in the catalytic mechanism. A Radical SAM core domain is found at 97 to 326; it reads HPDRITACIS…AEIRREKGAD (230 aa). An intrachain disulfide couples cysteine 104 to cysteine 331. 3 residues coordinate [4Fe-4S] cluster: cysteine 111, cysteine 115, and cysteine 118. Residues 158–159, serine 190, 213–215, and asparagine 289 contribute to the S-adenosyl-L-methionine site; these read GE and SLH. Catalysis depends on cysteine 331, which acts as the S-methylcysteine intermediate.

The protein belongs to the radical SAM superfamily. RlmN family. It depends on [4Fe-4S] cluster as a cofactor.

Its subcellular location is the cytoplasm. The enzyme catalyses adenosine(2503) in 23S rRNA + 2 reduced [2Fe-2S]-[ferredoxin] + 2 S-adenosyl-L-methionine = 2-methyladenosine(2503) in 23S rRNA + 5'-deoxyadenosine + L-methionine + 2 oxidized [2Fe-2S]-[ferredoxin] + S-adenosyl-L-homocysteine. It catalyses the reaction adenosine(37) in tRNA + 2 reduced [2Fe-2S]-[ferredoxin] + 2 S-adenosyl-L-methionine = 2-methyladenosine(37) in tRNA + 5'-deoxyadenosine + L-methionine + 2 oxidized [2Fe-2S]-[ferredoxin] + S-adenosyl-L-homocysteine. In terms of biological role, specifically methylates position 2 of adenine 2503 in 23S rRNA and position 2 of adenine 37 in tRNAs. The chain is Probable dual-specificity RNA methyltransferase RlmN from Thermotoga petrophila (strain ATCC BAA-488 / DSM 13995 / JCM 10881 / RKU-1).